The chain runs to 705 residues: Dynein axonemal intermediate chain 1 (705 aa).

Disordered regions lie at residues 1-44 (MPSK…AVRP) and 122-169 (AGSQ…DVPA). Phosphoserine occurs at positions 124 and 127. Positions 124–135 (SQESVKVVTSDT) are enriched in polar residues. Over residues 136 to 159 (EILEEEEEPKEGEGEGEGEAEGEA) the composition is skewed to acidic residues. WD repeat units lie at residues 386–426 (SSES…SQPC), 435–478 (KHTD…LVHI), 543–583 (AHNM…PMFI), 585–625 (DLNA…YEAI), and 633–672 (KKKNKITHVQFNPIHPIIIVGDDRGHITCLKLSPNLRKMP).

The protein belongs to the dynein intermediate chain family. As to quaternary structure, consists of at least two heavy chains and a number of intermediate and light chains. Interacts with BICD2. Interacts with CFAP45 and CFAP52. Interacts with CFAP53.

The protein localises to the cytoplasm. The protein resides in the cytoskeleton. It is found in the cilium axoneme. Functionally, part of the dynein complex of respiratory cilia. This Rattus norvegicus (Rat) protein is Dynein axonemal intermediate chain 1 (Dnai1).